We begin with the raw amino-acid sequence, 337 residues long: MALEMFYDDDADLSIIQGRKVGVIGYGSQGHAHSLSLRDSGVQVRVGLKQGSRSRPKVEEQGLDVDTPAEVAKWADVVMVLAPDTAQAEIFAGDIEPNLKPGDALFFGHGLNVHFGLIKPPADVAVAMVAPKGPGHLVRRQFVDGKGVPCLVAVEQDPRGDGLALALSYAKAIGGTRAGVIKTTFKDETETDLFGEQTVLCGGTEELVKAGFEVMVEAGYPAELAYFEVLHELKLIVDLMYEGGLARMYYSVSDTAEFGGYLSGPRVIDAGTKERMRDILREIQDGSFVHKLVADVEGGNKQLEELRRQNAEHPIEVVGKKLRDLMSWVDRPITETA.

The KARI N-terminal Rossmann domain occupies 3–183 (LEMFYDDDAD…GGTRAGVIKT (181 aa)). NADP(+) contacts are provided by residues 26–29 (YGSQ), K49, S52, S54, and 84–87 (DTAQ). H109 is an active-site residue. G135 provides a ligand contact to NADP(+). The KARI C-terminal knotted domain maps to 184 to 329 (TFKDETETDL…KKLRDLMSWV (146 aa)). The Mg(2+) site is built by D192, E196, E228, and E232. S253 is a binding site for substrate.

This sequence belongs to the ketol-acid reductoisomerase family. Requires Mg(2+) as cofactor.

It catalyses the reaction (2R)-2,3-dihydroxy-3-methylbutanoate + NADP(+) = (2S)-2-acetolactate + NADPH + H(+). The enzyme catalyses (2R,3R)-2,3-dihydroxy-3-methylpentanoate + NADP(+) = (S)-2-ethyl-2-hydroxy-3-oxobutanoate + NADPH + H(+). It functions in the pathway amino-acid biosynthesis; L-isoleucine biosynthesis; L-isoleucine from 2-oxobutanoate: step 2/4. The protein operates within amino-acid biosynthesis; L-valine biosynthesis; L-valine from pyruvate: step 2/4. Functionally, involved in the biosynthesis of branched-chain amino acids (BCAA). Catalyzes an alkyl-migration followed by a ketol-acid reduction of (S)-2-acetolactate (S2AL) to yield (R)-2,3-dihydroxy-isovalerate. In the isomerase reaction, S2AL is rearranged via a Mg-dependent methyl migration to produce 3-hydroxy-3-methyl-2-ketobutyrate (HMKB). In the reductase reaction, this 2-ketoacid undergoes a metal-dependent reduction by NADPH to yield (R)-2,3-dihydroxy-isovalerate. In Mycobacterium bovis (strain BCG / Pasteur 1173P2), this protein is Ketol-acid reductoisomerase (NADP(+)).